Here is a 471-residue protein sequence, read N- to C-terminus: 7-dehydrocholesterol reductase (471 aa).

Residues 1–23 (MASKSQHNAPKVKSPNGKAGSQG) form a disordered region. S14 is subject to Phosphoserine. Transmembrane regions (helical) follow at residues 36 to 56 (LASI…FIMA), 95 to 115 (LYAL…DFCH), 144 to 164 (LQAW…LSWF), 173 to 193 (WIPL…FAMI), 233 to 253 (LFFN…SFAA), 262 to 282 (VTNS…DFFW), 302 to 322 (LGWG…LYLV), and 327 to 347 (QLST…YYIF). Residues K354, R358, L391, W396, and 403-404 (NY) contribute to the NADP(+) site. Residues 416–436 (LACGGGHLLPYFYIIYMTILL) form a helical membrane-spanning segment. NADP(+) contacts are provided by residues D443, 447-451 (CANKY), and Y458.

The protein belongs to the ERG4/ERG24 family. Interacts with DHCR24; this interaction regulates DHCR7 activity. Interacts with TMEM147.

It is found in the endoplasmic reticulum membrane. The enzyme catalyses cholesterol + NADP(+) = 7-dehydrocholesterol + NADPH + H(+). It carries out the reaction 7-dehydrodesmosterol + NADPH + H(+) = desmosterol + NADP(+). The catalysed reaction is 5,6alpha-epoxy-5alpha-cholestan-3beta-ol + H2O = 5alpha-cholestane-3beta,5,6beta-triol. It catalyses the reaction 5,6beta-epoxy-5beta-cholestan-3beta-ol + H2O = 5alpha-cholestane-3beta,5,6beta-triol. It functions in the pathway steroid biosynthesis; cholesterol biosynthesis. In terms of biological role, oxidoreductase that catalyzes the last step of the cholesterol synthesis pathway, which transforms cholesta-5,7-dien-3beta-ol (7-dehydrocholesterol,7-DHC) into cholesterol by reducing the C7-C8 double bond of its sterol core. Can also metabolize cholesta-5,7,24-trien-3beta-ol (7-dehydrodemosterol, 7-DHD) to desmosterol, which is then metabolized by the Delta(24)-sterol reductase (DHCR24) to cholesterol. Modulates ferroptosis (a form of regulated cell death driven by iron-dependent lipid peroxidation) through the metabolic breakdown of the anti-ferroptotic metabolites 7-DHC and 7-DHD which, when accumulated, divert the propagation of peroxyl radical-mediated damage from phospholipid components to its sterol core, protecting plasma and mitochondrial membranes from phospholipid autoxidation. Component of the microsomal antiestrogen binding site (AEBS), a multiproteic complex at the ER membrane that consists of an association between cholestenol Delta-isomerase/EBP and DHCR7. This complex is responsible for cholesterol-5,6-epoxide hydrolase (ChEH) activity, which consists in the hydration of cholesterol-5,6-epoxides (5,6-EC) into cholestane-3beta,5alpha,6beta-triol (CT). The precise role of each component of this complex has not been described yet. The polypeptide is 7-dehydrocholesterol reductase (Dhcr7) (Mus musculus (Mouse)).